A 419-amino-acid chain; its full sequence is Glutamyl-tRNA reductase (419 aa).

Residues 49–52, Ser-107, 112–114, and Gln-118 each bind substrate; these read TCNR and EPQ. Cys-50 (nucleophile) is an active-site residue. 187 to 192 is an NADP(+) binding site; that stretch reads GAGETI.

It belongs to the glutamyl-tRNA reductase family. As to quaternary structure, homodimer.

It carries out the reaction (S)-4-amino-5-oxopentanoate + tRNA(Glu) + NADP(+) = L-glutamyl-tRNA(Glu) + NADPH + H(+). It functions in the pathway porphyrin-containing compound metabolism; protoporphyrin-IX biosynthesis; 5-aminolevulinate from L-glutamyl-tRNA(Glu): step 1/2. Catalyzes the NADPH-dependent reduction of glutamyl-tRNA(Glu) to glutamate 1-semialdehyde (GSA). In Psychromonas ingrahamii (strain DSM 17664 / CCUG 51855 / 37), this protein is Glutamyl-tRNA reductase.